Reading from the N-terminus, the 218-residue chain is uncharacterized protein (218 aa).

The next 5 membrane-spanning stretches (helical) occupy residues 28-48 (ILLF…LSGL), 66-86 (FDIG…WKPL), 92-112 (LGTL…TKIL), 122-142 (MIFC…YLTC), and 173-193 (ISVC…TVLF).

The protein localises to the cell membrane. This is an uncharacterized protein from Haemophilus influenzae (strain ATCC 51907 / DSM 11121 / KW20 / Rd).